The sequence spans 512 residues: NAD(P)H-quinone oxidoreductase subunit 2, organellar chromatophore (512 aa).

A run of 14 helical transmembrane segments spans residues 6 to 26 (LLAL…LLAL), 43 to 63 (WVPP…ASQW), 80 to 100 (LAIA…MISW), 107 to 127 (GAPM…AMFL), 133 to 153 (LVSI…LAGY), 168 to 188 (LLVG…LYGL), 210 to 230 (AALA…AVPF), 242 to 262 (PTPI…ALAL), 276 to 296 (WKFL…IVAL), 304 to 324 (MLAY…VCGT), 332 to 352 (ILYL…VILF), 376 to 396 (IGLS…GFFG), 411 to 431 (LLVV…ISVI), and 464 to 484 (VALL…NPLF).

The protein belongs to the complex I subunit 2 family. NDH-1 can be composed of about 15 different subunits; different subcomplexes with different compositions have been identified which probably have different functions.

Its subcellular location is the plastid. The protein localises to the organellar chromatophore thylakoid membrane. The enzyme catalyses a plastoquinone + NADH + (n+1) H(+)(in) = a plastoquinol + NAD(+) + n H(+)(out). The catalysed reaction is a plastoquinone + NADPH + (n+1) H(+)(in) = a plastoquinol + NADP(+) + n H(+)(out). NDH-1 shuttles electrons from an unknown electron donor, via FMN and iron-sulfur (Fe-S) centers, to quinones in the respiratory and/or the photosynthetic chain. The immediate electron acceptor for the enzyme in this species is believed to be plastoquinone. Couples the redox reaction to proton translocation, and thus conserves the redox energy in a proton gradient. Cyanobacterial NDH-1 also plays a role in inorganic carbon-concentration. The sequence is that of NAD(P)H-quinone oxidoreductase subunit 2, organellar chromatophore from Paulinella chromatophora.